The primary structure comprises 189 residues: Elongation factor P (189 aa).

Lys-34 is subject to N6-(3,6-diaminohexanoyl)-5-hydroxylysine.

It belongs to the elongation factor P family. May be beta-lysylated on the epsilon-amino group of Lys-34 by the combined action of EpmA and EpmB, and then hydroxylated on the C5 position of the same residue by EpmC (if this protein is present). Lysylation is critical for the stimulatory effect of EF-P on peptide-bond formation. The lysylation moiety may extend toward the peptidyltransferase center and stabilize the terminal 3-CCA end of the tRNA. Hydroxylation of the C5 position on Lys-34 may allow additional potential stabilizing hydrogen-bond interactions with the P-tRNA.

It is found in the cytoplasm. The protein operates within protein biosynthesis; polypeptide chain elongation. Involved in peptide bond synthesis. Alleviates ribosome stalling that occurs when 3 or more consecutive Pro residues or the sequence PPG is present in a protein, possibly by augmenting the peptidyl transferase activity of the ribosome. Modification of Lys-34 is required for alleviation. In Francisella tularensis subsp. tularensis (strain FSC 198), this protein is Elongation factor P.